The primary structure comprises 341 residues: Anthranilate phosphoribosyltransferase (341 aa).

Residues Gly81, 84–85, 91–94, 109–117, and Ser121 contribute to the 5-phospho-alpha-D-ribose 1-diphosphate site; these read GD, NVST, and KHGNRSVSS. Gly81 is a binding site for anthranilate. Mg(2+) is bound at residue Ser93. Residue Asn112 participates in anthranilate binding. Arg167 is a binding site for anthranilate. Positions 226 and 227 each coordinate Mg(2+).

This sequence belongs to the anthranilate phosphoribosyltransferase family. Homodimer. Mg(2+) is required as a cofactor.

The catalysed reaction is N-(5-phospho-beta-D-ribosyl)anthranilate + diphosphate = 5-phospho-alpha-D-ribose 1-diphosphate + anthranilate. It participates in amino-acid biosynthesis; L-tryptophan biosynthesis; L-tryptophan from chorismate: step 2/5. Its function is as follows. Catalyzes the transfer of the phosphoribosyl group of 5-phosphorylribose-1-pyrophosphate (PRPP) to anthranilate to yield N-(5'-phosphoribosyl)-anthranilate (PRA). This chain is Anthranilate phosphoribosyltransferase, found in Saccharophagus degradans (strain 2-40 / ATCC 43961 / DSM 17024).